A 150-amino-acid polypeptide reads, in one-letter code: 3-hydroxyacyl-[acyl-carrier-protein] dehydratase FabZ (150 aa).

Residue H47 is part of the active site.

This sequence belongs to the thioester dehydratase family. FabZ subfamily.

The protein localises to the cytoplasm. The enzyme catalyses a (3R)-hydroxyacyl-[ACP] = a (2E)-enoyl-[ACP] + H2O. In terms of biological role, involved in unsaturated fatty acids biosynthesis. Catalyzes the dehydration of short chain beta-hydroxyacyl-ACPs and long chain saturated and unsaturated beta-hydroxyacyl-ACPs. The chain is 3-hydroxyacyl-[acyl-carrier-protein] dehydratase FabZ from Verminephrobacter eiseniae (strain EF01-2).